A 286-amino-acid chain; its full sequence is 2,3,4,5-tetrahydropyridine-2,6-dicarboxylate N-succinyltransferase (286 aa).

2 residues coordinate substrate: Arg111 and Asp148.

Belongs to the transferase hexapeptide repeat family. As to quaternary structure, homotrimer.

It localises to the cytoplasm. The enzyme catalyses (S)-2,3,4,5-tetrahydrodipicolinate + succinyl-CoA + H2O = (S)-2-succinylamino-6-oxoheptanedioate + CoA. It functions in the pathway amino-acid biosynthesis; L-lysine biosynthesis via DAP pathway; LL-2,6-diaminopimelate from (S)-tetrahydrodipicolinate (succinylase route): step 1/3. The sequence is that of 2,3,4,5-tetrahydropyridine-2,6-dicarboxylate N-succinyltransferase from Rhizobium etli (strain ATCC 51251 / DSM 11541 / JCM 21823 / NBRC 15573 / CFN 42).